The chain runs to 129 residues: Large ribosomal subunit protein bL17 (129 aa).

The protein belongs to the bacterial ribosomal protein bL17 family. As to quaternary structure, part of the 50S ribosomal subunit. Contacts protein L32.

The sequence is that of Large ribosomal subunit protein bL17 from Yersinia pseudotuberculosis serotype O:1b (strain IP 31758).